A 748-amino-acid chain; its full sequence is Translation factor GUF1 homolog 1, mitochondrial (748 aa).

Residues 1 to 29 (MRVGCCLLLKPIRQRLCTASISSRHIMRW) constitute a mitochondrion transit peptide. Residues 94–276 (SHIRNFAVVA…AIIERVPPPT (183 aa)) form the tr-type G domain. GTP contacts are provided by residues 103–110 (AHVDHGKT), 167–171 (DTPGH), and 221–224 (TKMD).

This sequence belongs to the TRAFAC class translation factor GTPase superfamily. Classic translation factor GTPase family. LepA subfamily.

It localises to the mitochondrion inner membrane. The catalysed reaction is GTP + H2O = GDP + phosphate + H(+). Its function is as follows. Promotes mitochondrial protein synthesis. May act as a fidelity factor of the translation reaction, by catalyzing a one-codon backward translocation of tRNAs on improperly translocated ribosomes. Binds to mitochondrial ribosomes in a GTP-dependent manner. The polypeptide is Translation factor GUF1 homolog 1, mitochondrial (Trypanosoma cruzi (strain CL Brener)).